The sequence spans 780 residues: Cullin-5 (780 aa).

Phosphoserine is present on S34. A Phosphothreonine modification is found at T210. In terms of domain architecture, Cullin neddylation spans 711–772 (RILRTQEAII…HKYIRRDESD (62 aa)). Residue K724 forms a Glycyl lysine isopeptide (Lys-Gly) (interchain with G-Cter in NEDD8) linkage.

This sequence belongs to the cullin family. Component of multiple cullin-5-RING E3 ubiquitin-protein ligase complexes (ECS complexes, also named CRL5 complexes) formed of CUL5, Elongin BC (ELOB and ELOC), RNF7/RBX2 and a variable SOCS box domain-containing protein as substrate-specific recognition component. CUL5-containing ECS complexes specifically contain RNF7/RBX2, and not RBX1, as catalytic subunit. Component of the ECS(ASB2) complex with the substrate recognition component ASB2. Component of the ECS(ASB6) complex with the substrate recognition component ASB6. Component of the ECS(ASB7) complex with the substrate recognition component ASB7. Component of the ECS(ASB9) complex with the substrate recognition component ASB9. Component of the ECS(ASB11) complex with the substrate recognition component ASB11. Component of the ECS(ASB12) complex with the substrate recognition component ASB12. Component of the ECS(LRRC41) complex with the substrate recognition component LRRC41. Component of the ECS(SOCS1) complex with the substrate recognition component SOCS1. Component of the ECS(SOCS2) complex with the substrate recognition component SOCS2. Component of the ECS(WSB1) complex with the substrate recognition subunit WSB1. Component of the ECS(SOCS3) complex with the substrate recognition component SOCS3. Component of the ECS(SOCS7) complex with the substrate recognition component SOCS7. Component of the ECS(SPSB1) complex with the substrate recognition component SPSB1. Component of the ECS(SPSB3) complex with the substrate recognition component SPSB3. Component of the ECS(SPSB2) complex with the substrate recognition component SPSB2. Component of the ECS(SPSB4) complex with the substrate recognition component SPSB4. Component of the ECS(RAB40) complex with the substrate recognition subunit RAB40A, RAB40B or RAB40C. Component of the ECS(KLHDC1) complex with the substrate recognition component KLHDC1. Component of the ECS(PCMTD1) complex with the substrate recognition subunit PCMTD1. May also form complexes containing RBX1 and ELOA or VHL; additional evidence is however required to confirm this result in vivo. Interacts (when neddylated) with ARIH2; leading to activate the E3 ligase activity of ARIH2. Interacts with ERCC6; the interaction is induced by DNA damaging agents or inhibitors of RNA polymerase II elongation. Interacts with ELOA (via the BC-box). Interacts (unneddylated form) with DCUN1D1, DCUN1D2, DCUN1D3, DCUN1D4 and DCUN1D5; these interactions promote the cullin neddylation. In terms of assembly, (Microbial infection) Interacts (via the substrate recognition component) with HIV-1 Vif; forming an active cullin-5-RING E3 ubiquitin-protein ligase complex (ECS complex). As to quaternary structure, (Microbial infection) Interacts (via the substrate recognition component) with human adenovirus 5 proteins E1B-55K and E4-orf6. (Microbial infection) Interacts with herpes virus 8 protein LANA1; this interaction promotes the degradation of NF-kappa-B component RELA. In terms of assembly, (Microbial infection) Interacts with molluscum contagiosum virus protein MC132; this interaction promotes the degradation of NF-kappa-B component RELA. Post-translationally, neddylated; which enhances the ubiquitination activity of ECS complexes and prevents binding of the inhibitor CAND1. Deneddylated via its interaction with the COP9 signalosome (CSN).

It localises to the nucleus. It participates in protein modification; protein ubiquitination. Functionally, core component of multiple cullin-5-RING E3 ubiquitin-protein ligase complexes (ECS complexes, also named CRL5 complexes), which mediate the ubiquitination and subsequent proteasomal degradation of target proteins. Acts a scaffold protein that contributes to catalysis through positioning of the substrate and the ubiquitin-conjugating enzyme. The functional specificity of the E3 ubiquitin-protein ligase complex depends on the variable SOCS box-containing substrate recognition component. Acts as a key regulator of neuron positioning during cortex development: component of various SOCS-containing ECS complexes, such as the ECS(SOCS7) complex, that regulate reelin signaling by mediating ubiquitination and degradation of DAB1. ECS(SOCS1) seems to direct ubiquitination of JAK2. The ECS(SOCS2) complex mediates the ubiquitination and subsequent proteasomal degradation of phosphorylated EPOR and GHR. The ECS(SPSB3) complex catalyzes ubiquitination of nuclear CGAS. ECS(KLHDC1) complex is part of the DesCEND (destruction via C-end degrons) pathway and mediates ubiquitination and degradation of truncated SELENOS selenoprotein produced by failed UGA/Sec decoding, which ends with a glycine. The ECS(ASB9) complex mediates ubiquitination and degradation of CKB. As part of some ECS complex, promotes 'Lys-11'-linked ubiquitination and degradation of BTRC. As part of a multisubunit ECS complex, polyubiquitinates monoubiquitinated POLR2A. As part of the ECS(RAB40C) complex, mediates ANKRD28 ubiquitination and degradation, thereby inhibiting protein phosphatase 6 (PP6) complex activity and focal adhesion assembly during cell migration. As part of the ECS(RAB40A) complex, mediates RHOU 'Lys-48'-linked ubiquitination and degradation, thus inhibiting focal adhesion disassembly during cell migration. As part of the ECS(RAB40B) complex, mediates LIMA1/EPLIN and RAP2 ubiquitination, thereby regulating actin cytoskeleton dynamics and stress fiber formation during cell migration. May form a cell surface vasopressin receptor. In terms of biological role, (Microbial infection) Following infection by HIV-1 virus, CUL5 associates with HIV-1 Vif proteins and forms a cullin-5-RING E3 ubiquitin-protein ligase complex (ECS complex) that catalyzes ubiquitination and degradation of APOBEC3F and APOBEC3G. The complex can also ubiquitinate APOBEC3H to some extent. Its function is as follows. (Microbial infection) Seems to be involved in proteasomal degradation of p53/TP53 stimulated by adenovirus E1B-55 kDa protein. The polypeptide is Cullin-5 (Homo sapiens (Human)).